We begin with the raw amino-acid sequence, 188 residues long: Elongation factor P-like protein (188 aa).

It belongs to the elongation factor P family.

The sequence is that of Elongation factor P-like protein from Marinobacter nauticus (strain ATCC 700491 / DSM 11845 / VT8) (Marinobacter aquaeolei).